The following is a 146-amino-acid chain: Large ribosomal subunit protein uL15 (146 aa).

The tract at residues 1-54 (MTLRLNELAPAEGAKRDNRRLGRGIGSGVGKTGGRGVKGQKSRKSGGVRPGFEG) is disordered. Over residues 23-37 (RGIGSGVGKTGGRGV) the composition is skewed to gly residues.

Belongs to the universal ribosomal protein uL15 family. As to quaternary structure, part of the 50S ribosomal subunit.

Its function is as follows. Binds to the 23S rRNA. The protein is Large ribosomal subunit protein uL15 of Acinetobacter baylyi (strain ATCC 33305 / BD413 / ADP1).